A 439-amino-acid chain; its full sequence is Ribosomal protein uS12 methylthiotransferase RimO (439 aa).

Positions 2–114 constitute an MTTase N-terminal domain; sequence SKLYLMSLGC…IDEMILKKTN (113 aa). 6 residues coordinate [4Fe-4S] cluster: Cys11, Cys45, Cys77, Cys146, Cys150, and Cys153. Residues 132–363 enclose the Radical SAM core domain; the sequence is TGSNSHAFIK…VDEVIEKSFE (232 aa).

Belongs to the methylthiotransferase family. RimO subfamily. The cofactor is [4Fe-4S] cluster.

It localises to the cytoplasm. It catalyses the reaction L-aspartate(89)-[ribosomal protein uS12]-hydrogen + (sulfur carrier)-SH + AH2 + 2 S-adenosyl-L-methionine = 3-methylsulfanyl-L-aspartate(89)-[ribosomal protein uS12]-hydrogen + (sulfur carrier)-H + 5'-deoxyadenosine + L-methionine + A + S-adenosyl-L-homocysteine + 2 H(+). Catalyzes the methylthiolation of an aspartic acid residue of ribosomal protein uS12. The chain is Ribosomal protein uS12 methylthiotransferase RimO from Campylobacter jejuni subsp. jejuni serotype O:2 (strain ATCC 700819 / NCTC 11168).